The primary structure comprises 453 residues: Sialic acid-binding Ig-like lectin 6 (453 aa).

Residues 1 to 26 form the signal peptide; the sequence is MQGAQEASASEMLPLLLPLLWAGALA. Topologically, residues 27–347 are extracellular; it reads QERRFQLEGP…WKPEGRAGGV (321 aa). Residues 28-123 enclose the Ig-like V-type domain; that stretch reads ERRFQLEGPE…RDNAAYFFRL (96 aa). 3 disulfides stabilise this stretch: Cys-46-Cys-172, Cys-51-Cys-104, and Cys-166-Cys-215. Asn-103 carries N-linked (GlcNAc...) asparagine glycosylation. Arg-122 contributes to the N-acetylneuraminate binding site. The Ig-like C2-type 1 domain occupies 148-231; the sequence is PNISIPGTLE…AGVTMERTIQ (84 aa). Residues Asn-149 and Asn-163 are each glycosylated (N-linked (GlcNAc...) asparagine). A glycan (N-linked (GlcNAc...) asparagine) is linked at Asn-233. Residues 238-333 form the Ig-like C2-type 2 domain; sequence PQKVAISIFQ…PLGSLQISLS (96 aa). Cysteines 274 and 319 form a disulfide. A helical membrane pass occupies residues 348–368; that stretch reads LGAVWGASITTLVFLCVCFIF. Topologically, residues 369–453 are cytoplasmic; sequence RVKTRRKKAA…TEYSEIKIHK (85 aa). An ITIM motif motif is present at residues 424–429; that stretch reads LHYAVL. The SLAM-like motif signature appears at 444 to 449; that stretch reads TEYSEI.

Belongs to the immunoglobulin superfamily. SIGLEC (sialic acid binding Ig-like lectin) family. Interacts with LEP. In terms of tissue distribution, expressed at high levels in placenta (cyto- and syncytiotrophoblastic cells) and at lower levels in spleen, peripheral blood leukocytes (predominantly B-cells) and small intestine.

The protein localises to the cell membrane. Its subcellular location is the secreted. In terms of biological role, putative adhesion molecule that mediates sialic-acid dependent binding to cells. Binds to alpha-2,6-linked sialic acid. The sialic acid recognition site may be masked by cis interactions with sialic acids on the same cell surface. This Homo sapiens (Human) protein is Sialic acid-binding Ig-like lectin 6 (SIGLEC6).